A 211-amino-acid polypeptide reads, in one-letter code: Pyridoxine/pyridoxamine 5'-phosphate oxidase (211 aa).

Residues 7–10 and K65 contribute to the substrate site; that span reads RREY. Residues 60–65, 75–76, R81, K82, and Q104 each bind FMN; these read RIVLLK and YT. Substrate contacts are provided by Y122, R126, and S130. Residues 139–140 and W184 contribute to the FMN site; that span reads QS. Position 190-192 (190-192) interacts with substrate; it reads RLH. R194 provides a ligand contact to FMN.

It belongs to the pyridoxamine 5'-phosphate oxidase family. As to quaternary structure, homodimer. FMN serves as cofactor.

It carries out the reaction pyridoxamine 5'-phosphate + O2 + H2O = pyridoxal 5'-phosphate + H2O2 + NH4(+). The enzyme catalyses pyridoxine 5'-phosphate + O2 = pyridoxal 5'-phosphate + H2O2. The protein operates within cofactor metabolism; pyridoxal 5'-phosphate salvage; pyridoxal 5'-phosphate from pyridoxamine 5'-phosphate: step 1/1. It participates in cofactor metabolism; pyridoxal 5'-phosphate salvage; pyridoxal 5'-phosphate from pyridoxine 5'-phosphate: step 1/1. In terms of biological role, catalyzes the oxidation of either pyridoxine 5'-phosphate (PNP) or pyridoxamine 5'-phosphate (PMP) into pyridoxal 5'-phosphate (PLP). This chain is Pyridoxine/pyridoxamine 5'-phosphate oxidase, found in Vibrio parahaemolyticus serotype O3:K6 (strain RIMD 2210633).